Here is a 219-residue protein sequence, read N- to C-terminus: Thiamine-phosphate synthase (219 aa).

Residues 48 to 52 (QFRQK) and Asn-84 contribute to the 4-amino-2-methyl-5-(diphosphooxymethyl)pyrimidine site. Asp-85 and Asp-104 together coordinate Mg(2+). Ser-123 is a binding site for 4-amino-2-methyl-5-(diphosphooxymethyl)pyrimidine. Residue 150–152 (TPS) participates in 2-[(2R,5Z)-2-carboxy-4-methylthiazol-5(2H)-ylidene]ethyl phosphate binding. Position 153 (Lys-153) interacts with 4-amino-2-methyl-5-(diphosphooxymethyl)pyrimidine. Residues Gly-181 and 199–200 (IS) contribute to the 2-[(2R,5Z)-2-carboxy-4-methylthiazol-5(2H)-ylidene]ethyl phosphate site.

This sequence belongs to the thiamine-phosphate synthase family. It depends on Mg(2+) as a cofactor.

It catalyses the reaction 2-[(2R,5Z)-2-carboxy-4-methylthiazol-5(2H)-ylidene]ethyl phosphate + 4-amino-2-methyl-5-(diphosphooxymethyl)pyrimidine + 2 H(+) = thiamine phosphate + CO2 + diphosphate. It carries out the reaction 2-(2-carboxy-4-methylthiazol-5-yl)ethyl phosphate + 4-amino-2-methyl-5-(diphosphooxymethyl)pyrimidine + 2 H(+) = thiamine phosphate + CO2 + diphosphate. The catalysed reaction is 4-methyl-5-(2-phosphooxyethyl)-thiazole + 4-amino-2-methyl-5-(diphosphooxymethyl)pyrimidine + H(+) = thiamine phosphate + diphosphate. It participates in cofactor biosynthesis; thiamine diphosphate biosynthesis; thiamine phosphate from 4-amino-2-methyl-5-diphosphomethylpyrimidine and 4-methyl-5-(2-phosphoethyl)-thiazole: step 1/1. Functionally, condenses 4-methyl-5-(beta-hydroxyethyl)thiazole monophosphate (THZ-P) and 2-methyl-4-amino-5-hydroxymethyl pyrimidine pyrophosphate (HMP-PP) to form thiamine monophosphate (TMP). This is Thiamine-phosphate synthase from Helicobacter pylori (strain ATCC 700392 / 26695) (Campylobacter pylori).